We begin with the raw amino-acid sequence, 76 residues long: DNA-directed RNA polymerase subunit epsilon (76 aa).

This sequence belongs to the RNA polymerase subunit epsilon family. In terms of assembly, RNAP is composed of a core of 2 alpha, a beta and a beta' subunit. The core is associated with a delta subunit, and at least one of epsilon or omega. When a sigma factor is associated with the core the holoenzyme is formed, which can initiate transcription.

It carries out the reaction RNA(n) + a ribonucleoside 5'-triphosphate = RNA(n+1) + diphosphate. Functionally, a non-essential component of RNA polymerase (RNAP). The polypeptide is DNA-directed RNA polymerase subunit epsilon (Streptococcus agalactiae serotype Ia (strain ATCC 27591 / A909 / CDC SS700)).